The primary structure comprises 549 residues: Chaperonin GroEL 1 (549 aa).

Residues 30-33 (TLGP), K51, 87-91 (DGTTT), G415, 479-481 (NAA), and D495 contribute to the ATP site.

It belongs to the chaperonin (HSP60) family. As to quaternary structure, forms a cylinder of 14 subunits composed of two heptameric rings stacked back-to-back. Interacts with the co-chaperonin GroES.

Its subcellular location is the cytoplasm. The catalysed reaction is ATP + H2O + a folded polypeptide = ADP + phosphate + an unfolded polypeptide.. Together with its co-chaperonin GroES, plays an essential role in assisting protein folding. The GroEL-GroES system forms a nano-cage that allows encapsulation of the non-native substrate proteins and provides a physical environment optimized to promote and accelerate protein folding. The chain is Chaperonin GroEL 1 from Azoarcus sp. (strain BH72).